Reading from the N-terminus, the 1357-residue chain is MAYSYTEKKRIRKDFSKLPDVMDVPYLLAIQLDSYREFLQAGATKEQFRDIGLHAAFKSVFPIISYSGNAALEYVGYRLGEPAFDVKECVLRGVTFAVPLRVKVRLIIFDRESSNKAIKDIKEQEVYMGEIPLMTENGTFIINGTERVIVSQLHRSPGVFFDHDRGKTHSSGKLLYSARIIPYRGSWLDFEFDPKDCVFVRIDRRRKLPASVLLRALGYSTEEILNAFYATNVFHIKGETLNLELVPQRLRGEVASIDIKDGSGKVIVEQGRRITARHINQLEKAGVSQLEVPFDYLIGRTIAKAIVHPATGEIIAECNTELTLDLLAKVAKAQVVRIETLYTNDIDCGPFISDTLKIDNTSNQLEALVEIYRMMRPGEPPTKEAAETLFGNLFFSAERYDLSAVGRMKFNRRIGRTEIEGPGVLSKEDIIDVLKTLVDIRNGKGIVDDIDHLGNRRVRCVGEMAENQFRVGLVRVERAVKERLSMAESEGLMPQDLINAKPVAAAIKEFFGSSQLSQFMGQNNPLSEITHKRRVSALGPGGLTRERAGFEVRDVHPTHYGRVCPIETPEGPNIGLINSLATYARTNKYGFLESPYRVVKDSLVTDEIVFLSAIEEADHVIAQASATLNEKGQLVDELVAVRHLNEFTVKAPEDVTLMDVSPKQVVSVAASLIPFLEHDDANRALMGSNMQRQAVPTLRADKPLVGTGMERNVARDSGVCVVARRGGVIDSVDASRVVVRVADDEVETGEAGVDIYNLTKYTRSNQNTCINQRPLVSKGDVVARGDILADGPSTDMGELALGQNMRVAFMPWNGFNFEDSICLSERVVQEDRFTTIHIQELTCVARDTKLGPEEITADIPNVGEAALNKLDEAGIVYVGAEVQAGDILVGKVTPKGETQLTPEEKLLRAIFGEKASDVKDTSLRVPTGTKGTVIDVQVFTRDGVERDSRALSIEKMQLDQIRKDLNEEFRIVEGATFERLRAALVGAKAEGGPALKKGTEITDDYLDGLERGQWFKLRMADDALNEQLEKAQAYISDRRQLLDDKFEDKKRKLQQGDDLAPGVLKIVKVYLAIKRRIQPGDKMAGRHGNKGVVSVIMPVEDMPHDANGTPVDIVLNPLGVPSRMNVGQILETHLGLAAKGLGEKINRMLEEQRKVAELRKFLHEIYNEIGGREENLDELGDNEILALAKNLRGGVPMATPVFDGAKEREIKAMLKLADLPESGQMRLFDGRTGNQFERPTTVGYMYMLKLNHLVDDKMHARSTGSYSLVTQQPLGGKAQFGGQRFGEMEVWALEAYGAAYTLQEMLTVKSDDVNGRTKMYKNIVDGDHRMEAGMPESFNVLIKEIRSLGIDIELETE.

This sequence belongs to the RNA polymerase beta chain family. In terms of assembly, the RNAP catalytic core consists of 2 alpha, 1 beta, 1 beta' and 1 omega subunit. When a sigma factor is associated with the core the holoenzyme is formed, which can initiate transcription.

It catalyses the reaction RNA(n) + a ribonucleoside 5'-triphosphate = RNA(n+1) + diphosphate. Its function is as follows. DNA-dependent RNA polymerase catalyzes the transcription of DNA into RNA using the four ribonucleoside triphosphates as substrates. This Pseudomonas aeruginosa (strain UCBPP-PA14) protein is DNA-directed RNA polymerase subunit beta.